Reading from the N-terminus, the 122-residue chain is Small ribosomal subunit protein bS16 (122 aa).

The protein belongs to the bacterial ribosomal protein bS16 family.

The polypeptide is Small ribosomal subunit protein bS16 (Prochlorococcus marinus (strain MIT 9313)).